A 479-amino-acid chain; its full sequence is Aspartyl/glutamyl-tRNA(Asn/Gln) amidotransferase subunit B (479 aa).

It belongs to the GatB/GatE family. GatB subfamily. As to quaternary structure, heterotrimer of A, B and C subunits.

The enzyme catalyses L-glutamyl-tRNA(Gln) + L-glutamine + ATP + H2O = L-glutaminyl-tRNA(Gln) + L-glutamate + ADP + phosphate + H(+). It catalyses the reaction L-aspartyl-tRNA(Asn) + L-glutamine + ATP + H2O = L-asparaginyl-tRNA(Asn) + L-glutamate + ADP + phosphate + 2 H(+). Its function is as follows. Allows the formation of correctly charged Asn-tRNA(Asn) or Gln-tRNA(Gln) through the transamidation of misacylated Asp-tRNA(Asn) or Glu-tRNA(Gln) in organisms which lack either or both of asparaginyl-tRNA or glutaminyl-tRNA synthetases. The reaction takes place in the presence of glutamine and ATP through an activated phospho-Asp-tRNA(Asn) or phospho-Glu-tRNA(Gln). This Streptococcus suis (strain 98HAH33) protein is Aspartyl/glutamyl-tRNA(Asn/Gln) amidotransferase subunit B.